The sequence spans 278 residues: Undecaprenyl-diphosphatase 1 (278 aa).

A run of 7 helical transmembrane segments spans residues methionine 1–leucine 21, alanine 43–leucine 63, isoleucine 83–leucine 103, leucine 112–isoleucine 132, phenylalanine 192–tyrosine 212, isoleucine 224–tryptophan 244, and phenylalanine 257–isoleucine 277.

This sequence belongs to the UppP family.

It localises to the cell membrane. It catalyses the reaction di-trans,octa-cis-undecaprenyl diphosphate + H2O = di-trans,octa-cis-undecaprenyl phosphate + phosphate + H(+). Functionally, catalyzes the dephosphorylation of undecaprenyl diphosphate (UPP). Confers resistance to bacitracin. This chain is Undecaprenyl-diphosphatase 1, found in Oenococcus oeni (strain ATCC BAA-331 / PSU-1).